Consider the following 375-residue polypeptide: Growth/differentiation factor 8 (375 aa).

Residues Met-1–Leu-23 form the signal peptide. A propeptide spanning residues Asn-24–Arg-266 is cleaved from the precursor. Residue Asn-71 is glycosylated (N-linked (GlcNAc...) asparagine). Disulfide bonds link Cys-272/Cys-282, Cys-281/Cys-340, Cys-309/Cys-372, and Cys-313/Cys-374.

This sequence belongs to the TGF-beta family. As to quaternary structure, homodimer; disulfide-linked. Interacts with WFIKKN2, leading to inhibit its activity. Interacts with FSTL3. Post-translationally, synthesized as large precursor molecule that undergoes proteolytic cleavage to generate an N-terminal propeptide and a disulfide linked C-terminal dimer, which is the biologically active molecule. The circulating form consists of a latent complex of the C-terminal dimer and other proteins, including its propeptide, which maintain the C-terminal dimer in a latent, inactive state. Ligand activation requires additional cleavage of the prodomain by a tolloid-like metalloproteinase.

It is found in the secreted. Functionally, acts specifically as a negative regulator of skeletal muscle growth. In Papio hamadryas (Hamadryas baboon), this protein is Growth/differentiation factor 8 (MSTN).